The chain runs to 264 residues: tRNA (guanine-N(1)-)-methyltransferase (264 aa).

Residues Gly-125 and 145–150 (LGDFVL) each bind S-adenosyl-L-methionine.

The protein belongs to the RNA methyltransferase TrmD family. In terms of assembly, homodimer.

It is found in the cytoplasm. The enzyme catalyses guanosine(37) in tRNA + S-adenosyl-L-methionine = N(1)-methylguanosine(37) in tRNA + S-adenosyl-L-homocysteine + H(+). Specifically methylates guanosine-37 in various tRNAs. This chain is tRNA (guanine-N(1)-)-methyltransferase, found in Burkholderia ambifaria (strain ATCC BAA-244 / DSM 16087 / CCUG 44356 / LMG 19182 / AMMD) (Burkholderia cepacia (strain AMMD)).